Reading from the N-terminus, the 300-residue chain is Ribonuclease HIII (300 aa).

The region spanning 83-300 is the RNase H type-2 domain; sequence IPIIGSDEVG…THKAQALLTK (218 aa). A divalent metal cation contacts are provided by D89, E90, and D194.

The protein belongs to the RNase HII family. RnhC subfamily. Mn(2+) is required as a cofactor. Requires Mg(2+) as cofactor.

Its subcellular location is the cytoplasm. The enzyme catalyses Endonucleolytic cleavage to 5'-phosphomonoester.. Functionally, endonuclease that specifically degrades the RNA of RNA-DNA hybrids. The protein is Ribonuclease HIII of Streptococcus pyogenes serotype M1.